The sequence spans 201 residues: Mediator of RNA polymerase II transcription subunit 19 (201 aa).

A disordered region spans residues 166 to 201 (GTGKSNAKKRKNRSNGSSMATPNSEMQDDVKRRRLE).

It belongs to the Mediator complex subunit 19 family. In terms of assembly, component of the Mediator complex.

The protein resides in the nucleus. In terms of biological role, component of the Mediator complex, a coactivator involved in the regulated transcription of nearly all RNA polymerase II-dependent genes. Mediator functions as a bridge to convey information from gene-specific regulatory proteins to the basal RNA polymerase II transcription machinery. Mediator is recruited to promoters by direct interactions with regulatory proteins and serves as a scaffold for the assembly of a functional preinitiation complex with RNA polymerase II and the general transcription factors. The chain is Mediator of RNA polymerase II transcription subunit 19 (ROX3) from Candida glabrata (strain ATCC 2001 / BCRC 20586 / JCM 3761 / NBRC 0622 / NRRL Y-65 / CBS 138) (Yeast).